A 350-amino-acid polypeptide reads, in one-letter code: Probable dual-specificity RNA methyltransferase RlmN (350 aa).

The 238-residue stretch at 105 to 342 (ANGKNSVCIS…VRQSKGANIN (238 aa)) folds into the Radical SAM core domain. C112 and C345 are disulfide-bonded. Residues C119, C123, and C126 each contribute to the [4Fe-4S] cluster site. Residues 166–167 (GE), S198, 221–223 (SLH), and N302 contribute to the S-adenosyl-L-methionine site. The active-site S-methylcysteine intermediate is C345.

The protein belongs to the radical SAM superfamily. RlmN family. [4Fe-4S] cluster serves as cofactor.

The protein localises to the cytoplasm. It carries out the reaction adenosine(2503) in 23S rRNA + 2 reduced [2Fe-2S]-[ferredoxin] + 2 S-adenosyl-L-methionine = 2-methyladenosine(2503) in 23S rRNA + 5'-deoxyadenosine + L-methionine + 2 oxidized [2Fe-2S]-[ferredoxin] + S-adenosyl-L-homocysteine. The enzyme catalyses adenosine(37) in tRNA + 2 reduced [2Fe-2S]-[ferredoxin] + 2 S-adenosyl-L-methionine = 2-methyladenosine(37) in tRNA + 5'-deoxyadenosine + L-methionine + 2 oxidized [2Fe-2S]-[ferredoxin] + S-adenosyl-L-homocysteine. Specifically methylates position 2 of adenine 2503 in 23S rRNA and position 2 of adenine 37 in tRNAs. The chain is Probable dual-specificity RNA methyltransferase RlmN from Endomicrobium trichonymphae.